Reading from the N-terminus, the 201-residue chain is Recombination protein RecR (201 aa).

Residues 57–72 (CADCRTFTEQPVCTIC) form a C4-type zinc finger. One can recognise a Toprim domain in the interval 81 to 176 (GQICVVESPA…MASRIAHGVP (96 aa)).

This sequence belongs to the RecR family.

Functionally, may play a role in DNA repair. It seems to be involved in an RecBC-independent recombinational process of DNA repair. It may act with RecF and RecO. This is Recombination protein RecR from Sodalis glossinidius (strain morsitans).